We begin with the raw amino-acid sequence, 65 residues long: Alpha-toxin Lqq4 (65 aa).

Residues 3-65 (RDAYIADDKN…VPIRIPGKCR (63 aa)) enclose the LCN-type CS-alpha/beta domain. The specificity module, loop 1 stretch occupies residues 9–13 (DDKNC). 4 disulfide bridges follow: Cys13–Cys64, Cys17–Cys37, Cys23–Cys47, and Cys27–Cys49. 2 specificity module, loop regions span residues 40-44 (LGKYG) and 57-65 (PIRIPGKCR). Arg65 bears the Arginine amide mark.

This sequence belongs to the long (4 C-C) scorpion toxin superfamily. Sodium channel inhibitor family. Alpha subfamily. In terms of processing, the recombinant toxin which is used for activity tests is not amidated. However, C-terminal amidation does not appear to play an important role in activity, since the non-amidated recombinant toxin and the native toxin (which is amidated) show similar activities on all sodium channels tested. Expressed by the venom gland.

The protein resides in the secreted. In terms of biological role, alpha toxins bind voltage-independently at site-3 of sodium channels (Nav) and inhibit the inactivation of the activated channels, thereby blocking neuronal transmission. Both native and recombinant (non-amidated) toxins inhibit inactivation of Nav1.2/SCN2A (EC(50)=31.2-36.6 nM), Nav1.6/SCN8A (EC(50)=6.9-8.9 nM), and Nav1.7/SCN9A (EC(50)=182.0-260.1 nM). In Leiurus quinquestriatus quinquestriatus (Egyptian scorpion), this protein is Alpha-toxin Lqq4.